The sequence spans 116 residues: Iron-sulfur cluster insertion protein ErpA (116 aa).

Iron-sulfur cluster is bound by residues C44, C108, and C110.

The protein belongs to the HesB/IscA family. As to quaternary structure, homodimer. The cofactor is iron-sulfur cluster.

In terms of biological role, required for insertion of 4Fe-4S clusters for at least IspG. The protein is Iron-sulfur cluster insertion protein ErpA of Shewanella pealeana (strain ATCC 700345 / ANG-SQ1).